Here is a 275-residue protein sequence, read N- to C-terminus: MKVLLGLLLGYSVLILTHELPDLSATQHPPKEELAYWCTYVKNCDFCWDCQNDICKNKITNESISINSIVNCRVTRDSIHQWCFYEISVKMPNHHNMECSLPRPYTGNEIFMEKWGGGDYWPIIIRHCCFYLVFSIAFVGYIVFAYHKNLHLNTTMKLLALLSILIWLSQPGLNRPLSIFYMKQNLPRTYTPPVRELEYWCTYGKHCHFCWECRHGICKNKVWDDMPFIKQNDYISQCSIARYFDRCMYFIKPKTPYIHYMDCSQPTAYEGFSHS.

The helical transmembrane segment at Leu-5 to Ala-25 threads the bilayer. The N-linked (GlcNAc...) asparagine; by host glycan is linked to Asn-61. Transmembrane regions (helical) follow at residues His-127–His-147 and Asn-149–Ser-169.

This sequence belongs to the asfivirus MGF 110 family.

It localises to the host membrane. Its function is as follows. Plays a role in virus cell tropism, and may be required for efficient virus replication in macrophages. This chain is Protein MGF 110-11L, found in African swine fever virus (isolate Pig/Kenya/KEN-50/1950) (ASFV).